A 160-amino-acid chain; its full sequence is Cytochrome b6-f complex subunit 4 (160 aa).

3 helical membrane-spanning segments follow: residues leucine 36–isoleucine 56, leucine 95–glutamate 115, and threonine 131–isoleucine 151.

Belongs to the cytochrome b family. PetD subfamily. As to quaternary structure, the 4 large subunits of the cytochrome b6-f complex are cytochrome b6, subunit IV (17 kDa polypeptide, petD), cytochrome f and the Rieske protein, while the 4 small subunits are petG, petL, petM and petN. The complex functions as a dimer.

It is found in the plastid. The protein resides in the chloroplast thylakoid membrane. Functionally, component of the cytochrome b6-f complex, which mediates electron transfer between photosystem II (PSII) and photosystem I (PSI), cyclic electron flow around PSI, and state transitions. The protein is Cytochrome b6-f complex subunit 4 of Acorus calamus (Sweet flag).